The chain runs to 127 residues: Glycine cleavage system H protein (127 aa).

A Lipoyl-binding domain is found at 23–105 (KVSVGITDFA…YGEGWIAVIE (83 aa)). An N6-lipoyllysine modification is found at Lys64.

The protein belongs to the GcvH family. As to quaternary structure, the glycine cleavage system is composed of four proteins: P, T, L and H. (R)-lipoate is required as a cofactor.

Functionally, the glycine cleavage system catalyzes the degradation of glycine. The H protein shuttles the methylamine group of glycine from the P protein to the T protein. The sequence is that of Glycine cleavage system H protein from Coprothermobacter proteolyticus (strain ATCC 35245 / DSM 5265 / OCM 4 / BT).